A 910-amino-acid polypeptide reads, in one-letter code: DNA mismatch repair protein MutS (910 aa).

607-614 is an ATP binding site; sequence GPNMAGKS.

The protein belongs to the DNA mismatch repair MutS family.

Its function is as follows. This protein is involved in the repair of mismatches in DNA. It is possible that it carries out the mismatch recognition step. This protein has a weak ATPase activity. The chain is DNA mismatch repair protein MutS from Geobacillus thermodenitrificans (strain NG80-2).